We begin with the raw amino-acid sequence, 364 residues long: F-box/kelch-repeat protein At3g23880 (364 aa).

The F-box domain maps to Met8–His54. Kelch repeat units follow at residues Asp169 to Gly215 and Ile216 to Asp265.

This Arabidopsis thaliana (Mouse-ear cress) protein is F-box/kelch-repeat protein At3g23880.